The following is a 187-amino-acid chain: Isopentenyl-diphosphate Delta-isomerase (187 aa).

The Mn(2+) site is built by histidine 36, histidine 43, and histidine 80. The region spanning 41–178 (VRHRAFTALL…RQLRLCPWFE (138 aa)) is the Nudix hydrolase domain. Glutamate 98 is a binding site for Mg(2+). Residues glutamate 127 and glutamate 129 each contribute to the Mn(2+) site. Residue glutamate 129 is part of the active site.

It belongs to the IPP isomerase type 1 family. Requires Mg(2+) as cofactor. Mn(2+) serves as cofactor.

The protein resides in the cytoplasm. The enzyme catalyses isopentenyl diphosphate = dimethylallyl diphosphate. It participates in isoprenoid biosynthesis; dimethylallyl diphosphate biosynthesis; dimethylallyl diphosphate from isopentenyl diphosphate: step 1/1. Catalyzes the 1,3-allylic rearrangement of the homoallylic substrate isopentenyl (IPP) to its highly electrophilic allylic isomer, dimethylallyl diphosphate (DMAPP). This is Isopentenyl-diphosphate Delta-isomerase from Haloarcula marismortui (strain ATCC 43049 / DSM 3752 / JCM 8966 / VKM B-1809) (Halobacterium marismortui).